We begin with the raw amino-acid sequence, 119 residues long: Large ribosomal subunit protein bL20 (119 aa).

This sequence belongs to the bacterial ribosomal protein bL20 family. As to quaternary structure, part of the 50S ribosomal subunit.

Its function is as follows. Binds directly to 23S ribosomal RNA and is necessary for the in vitro assembly process of the 50S ribosomal subunit. It is not involved in the protein synthesizing functions of that subunit. The sequence is that of Large ribosomal subunit protein bL20 (rplT) from Bacillus subtilis (strain 168).